A 594-amino-acid chain; its full sequence is Putative 3,4-dihydroxy-2-butanone kinase (594 aa).

The DhaK domain occupies 11-341; sequence DPNDVVTEFI…LDAPTKAPNW (331 aa). Substrate-binding positions include 62-65, K113, and D118; that span reads GSGH. The active-site Tele-hemiaminal-histidine intermediate is the H226. A disordered region spans residues 339–358; the sequence is PNWPVGAEGNRPPAKIPVPL. The DhaL domain maps to 381-585; sequence HILETAIEAA…AAAWYRAAAL (205 aa). ATP contacts are provided by residues 410-413, 455-456, G499, 507-508, and 570-572; these read DGDC, TS, TL, and DPG.

The protein belongs to the dihydroxyacetone kinase (DAK) family.

This Solanum lycopersicum (Tomato) protein is Putative 3,4-dihydroxy-2-butanone kinase (DHBK).